Consider the following 127-residue polypeptide: uncharacterized protein (127 aa).

Residues 71–126 adopt a coiled-coil conformation; it reads FYLREYRRIRRRIKELKNRAKYISKGEIAYNPKIMKEVEALKEKLSEIEKKIEELK.

This is an uncharacterized protein from Aquifex aeolicus (strain VF5).